We begin with the raw amino-acid sequence, 1331 residues long: NPC1-like intracellular cholesterol transporter 1 (1331 aa).

The N-terminal stretch at 1 to 20 is a signal peptide; sequence MAAAWLGWLLWALLLSAAQG. At 21-282 the chain is on the extracellular side; it reads ELYTPKHEAG…RPSFYMGRMP (262 aa). 9 disulfide bridges follow: cysteine 32-cysteine 90, cysteine 38-cysteine 56, cysteine 77-cysteine 125, cysteine 91-cysteine 129, cysteine 113-cysteine 254, cysteine 116-cysteine 172, cysteine 189-cysteine 197, cysteine 243-cysteine 259, and cysteine 256-cysteine 263. Residues asparagine 53 and asparagine 85 are each glycosylated (N-linked (GlcNAc...) asparagine). The N-linked (GlcNAc...) asparagine glycan is linked to asparagine 138. Asparagine 244 carries an N-linked (GlcNAc...) asparagine glycan. The chain crosses the membrane as a helical span at residues 283–303; the sequence is GWLALIIIFTAVFVLLSAVLV. Over 304-352 the chain is Cytoplasmic; the sequence is RLRVVSNRNKNKAEGPQEAPKLPHKHKLSPHTILGRFFQNWGTRVASWP. The chain crosses the membrane as a helical span at residues 353–373; sequence LTVLALSFIVVIALAAGLTFI. The Extracellular segment spans residues 374-632; the sequence is ELTTDPVELW…DEINRTTIQD (259 aa). 6 N-linked (GlcNAc...) asparagine glycosylation sites follow: asparagine 416, asparagine 431, asparagine 464, asparagine 479, asparagine 497, and asparagine 506. Cysteine 471 and cysteine 485 form a disulfide bridge. Residues cysteine 525 and cysteine 542 are joined by a disulfide bond. N-linked (GlcNAc...) asparagine glycans are attached at residues asparagine 606 and asparagine 626. Residues 632 to 797 enclose the SSD domain; sequence DLPVFAVSYI…MTAFVALLSL (166 aa). The helical transmembrane segment at 633–653 threads the bilayer; sequence LPVFAVSYIIVFLYISLALGS. The Cytoplasmic portion of the chain corresponds to 654–665; sequence YSRCSRVAVESK. Residues 666-686 traverse the membrane as a helical segment; it reads ATLGLGGVIVVLGAVLAAMGF. Residues 687–696 lie on the Extracellular side of the membrane; it reads YSYLGVPSSL. Residues 697-717 form a helical membrane-spanning segment; the sequence is VIIQVVPFLVLAVGADNIFIF. The Cytoplasmic segment spans residues 718–742; that stretch reads VLEYQRLPRMPGEQREAHIGRTLGS. A helical transmembrane segment spans residues 743–763; it reads VAPSMLLCSLSEAICFFLGAL. At 764–776 the chain is on the extracellular side; the sequence is TPMPAVRTFALTS. Residues 777 to 797 traverse the membrane as a helical segment; sequence GLAIILDFLLQMTAFVALLSL. Residues 798–846 lie on the Cytoplasmic side of the membrane; that stretch reads DSKRQEASRPDVLCCFSTRKLPPPKEKEGLLLRFFRKIYAPFLLHRFIR. The helical transmembrane segment at 847–867 threads the bilayer; the sequence is PVVMLLFLTLFGANLYLMCNI. Topologically, residues 868-1113 are extracellular; that stretch reads NVGLDQELAL…QQYLTVLPEG (246 aa). N-linked (GlcNAc...) asparagine glycans are attached at residues asparagine 909 and asparagine 917. 3 disulfides stabilise this stretch: cysteine 920/cysteine 925, cysteine 967/cysteine 1025, and cysteine 981/cysteine 990. Residues asparagine 996, asparagine 1038, and asparagine 1076 are each glycosylated (N-linked (GlcNAc...) asparagine). Residues 1114-1134 form a helical membrane-spanning segment; it reads IFTLALCFVPTFVVCYLLLGL. The Cytoplasmic segment spans residues 1135–1142; sequence DMCSGILN. The chain crosses the membrane as a helical span at residues 1143 to 1163; it reads LLSIIMILVDTIGLMAVWGIS. At 1164 to 1165 the chain is on the extracellular side; that stretch reads YN. A helical membrane pass occupies residues 1166–1186; that stretch reads AVSLINLVTAVGMSVEFVSHI. The Cytoplasmic segment spans residues 1187–1206; that stretch reads TRSFAVSTKPTRLERAKDAT. A helical transmembrane segment spans residues 1207-1227; the sequence is VFMGSAVFAGVAMTNFPGILI. At 1228-1242 the chain is on the extracellular side; it reads LGFAQAQLIQIFFFR. A helical membrane pass occupies residues 1243 to 1263; the sequence is LNLLITLLGLLHGLVFLPVVL. Residues 1264–1331 are Cytoplasmic-facing; the sequence is SYLGPDVNQA…SSLPKSDQKF (68 aa).

This sequence belongs to the patched family. Interacts with RAB11A, MYO5B and RAB11FIP2. Interaction with RAB11A, MYO5B and RAB11FIP2 is required for proper transport to the plasma membrane upon cholesterol depletion. Interacts with NPC2. Interacts with LIMA1. In terms of processing, highly glycosylated. Small intestine showed the highest level of expression. Expression in other tissues including gall bladder, liver, testis and stomach is also observed. Along the duodenum-ileum axis, the levels vary in different segments of the intestine with peak expression in the proximal jejunum. Protein expression is confined to the enterocyte. Discrete localization to the epithelial layer bordering the luminal space along the crypt-villus axis. Protein expression in the enterocyte is observed closest to the luminal space. Expression in enterocytes from the proximal (jejunum) but not in the distal (ileum) region.

The protein resides in the apical cell membrane. It is found in the cell membrane. It carries out the reaction cholesterol(in) = cholesterol(out). The enzyme catalyses sitosterol(out) = sitosterol(in). In terms of biological role, plays a major role in cholesterol homeostasis. Critical for the uptake of cholesterol across the plasma membrane of the intestinal enterocyte. Involved in plant sterol absorption, it transports sitosterol, although at lower rates than cholesterol. Is the direct molecular target of ezetimibe, a drug that inhibits cholesterol absorption and is approved for the treatment of hypercholesterolemia. May have a function in the transport of multiple lipids and their homeostasis, thereby influencing lipid metabolism regulation. May be involved in caveolin trafficking from the plasma membrane. Acts as a negative regulator of NPC2 and down-regulates its expression and secretion by inhibiting its maturation and accelerating its degradation. This chain is NPC1-like intracellular cholesterol transporter 1, found in Rattus norvegicus (Rat).